A 288-amino-acid chain; its full sequence is Fructokinase (288 aa).

ATP is bound at residue threonine 131. Zn(2+) is bound by residues histidine 154, cysteine 169, histidine 172, and cysteine 175. ATP-binding positions include proline 183 and 231-235 (GVMNQ).

This sequence belongs to the ROK (NagC/XylR) family. It depends on Mg(2+) as a cofactor.

The catalysed reaction is D-fructose + ATP = D-fructose 6-phosphate + ADP + H(+). Inhibition by zinc ions. The chain is Fructokinase (scrK) from Pediococcus pentosaceus.